The primary structure comprises 256 residues: MAVGKNKRLSKGKKGLKKKVVDPFTRKEWYDIKAPSTFENRNVGKTLVNKSTGLKNAADFLKGRVVEVCLADLQGSEDHSFRKVKLRVDEVQGKNLLTNFHGLDFTTDKLRSMVRKWQTLIEANVTVKTADDYVLRVFAIAFTRRQSNQIKKTSYAQSSHIRAIRKVISEILTREVQNATLAQLTSKLIPEVINKEIENATKDIFPLQNVHIRKVKLLKQPKFDLGALMTLHGESSGEEKGKKVAGGFKDEILETV.

N-acetylalanine; partial is present on A2.

Belongs to the eukaryotic ribosomal protein eS1 family. In terms of assembly, component of the small ribosomal subunit. Mature ribosomes consist of a small (40S) and a large (60S) subunit. The 40S subunit contains about 33 different proteins and 1 molecule of RNA (18S). The 60S subunit contains about 49 different proteins and 3 molecules of RNA (25S, 5.8S and 5S).

Its subcellular location is the cytoplasm. The chain is Small ribosomal subunit protein eS1 from Eremothecium gossypii (strain ATCC 10895 / CBS 109.51 / FGSC 9923 / NRRL Y-1056) (Yeast).